The sequence spans 650 residues: Acetyl-coenzyme A synthetase (650 aa).

CoA-binding positions include 189–192 (RGGK), Thr307, and Asn331. Residues 383–385 (GEP), 407–412 (DTWWQT), Asp496, and Arg511 contribute to the ATP site. Ser519 contributes to the CoA binding site. Residue Arg522 participates in ATP binding. Val533, His535, and Val538 together coordinate Mg(2+). Position 580 (Arg580) interacts with CoA. An N6-acetyllysine modification is found at Lys605.

This sequence belongs to the ATP-dependent AMP-binding enzyme family. Mg(2+) is required as a cofactor. Post-translationally, acetylated. Deacetylation by the SIR2-homolog deacetylase activates the enzyme.

It carries out the reaction acetate + ATP + CoA = acetyl-CoA + AMP + diphosphate. In terms of biological role, catalyzes the conversion of acetate into acetyl-CoA (AcCoA), an essential intermediate at the junction of anabolic and catabolic pathways. AcsA undergoes a two-step reaction. In the first half reaction, AcsA combines acetate with ATP to form acetyl-adenylate (AcAMP) intermediate. In the second half reaction, it can then transfer the acetyl group from AcAMP to the sulfhydryl group of CoA, forming the product AcCoA. This chain is Acetyl-coenzyme A synthetase, found in Syntrophobacter fumaroxidans (strain DSM 10017 / MPOB).